The primary structure comprises 85 residues: Elongation factor 1-beta (85 aa).

Belongs to the EF-1-beta/EF-1-delta family.

Promotes the exchange of GDP for GTP in EF-1-alpha/GDP, thus allowing the regeneration of EF-1-alpha/GTP that could then be used to form the ternary complex EF-1-alpha/GTP/AAtRNA. This is Elongation factor 1-beta from Methanosphaerula palustris (strain ATCC BAA-1556 / DSM 19958 / E1-9c).